Reading from the N-terminus, the 248-residue chain is 4-hydroxy-tetrahydrodipicolinate reductase (248 aa).

13–18 contributes to the NAD(+) binding site; the sequence is GITGRL. An NADP(+)-binding site is contributed by arginine 36. Residues 84–86 and 108–111 contribute to the NAD(+) site; these read GTT and AANF. Histidine 140 (proton donor/acceptor) is an active-site residue. A (S)-2,3,4,5-tetrahydrodipicolinate-binding site is contributed by histidine 141. The active-site Proton donor is lysine 144. 150-151 serves as a coordination point for (S)-2,3,4,5-tetrahydrodipicolinate; the sequence is GT.

This sequence belongs to the DapB family.

The protein localises to the cytoplasm. It catalyses the reaction (S)-2,3,4,5-tetrahydrodipicolinate + NAD(+) + H2O = (2S,4S)-4-hydroxy-2,3,4,5-tetrahydrodipicolinate + NADH + H(+). The enzyme catalyses (S)-2,3,4,5-tetrahydrodipicolinate + NADP(+) + H2O = (2S,4S)-4-hydroxy-2,3,4,5-tetrahydrodipicolinate + NADPH + H(+). The protein operates within amino-acid biosynthesis; L-lysine biosynthesis via DAP pathway; (S)-tetrahydrodipicolinate from L-aspartate: step 4/4. In terms of biological role, catalyzes the conversion of 4-hydroxy-tetrahydrodipicolinate (HTPA) to tetrahydrodipicolinate. This chain is 4-hydroxy-tetrahydrodipicolinate reductase, found in Gluconobacter oxydans (strain 621H) (Gluconobacter suboxydans).